We begin with the raw amino-acid sequence, 393 residues long: tRNA (guanine-N(7)-)-methyltransferase (393 aa).

3 residues coordinate S-adenosyl-L-methionine: Glu-124, Glu-149, and Asp-176. Position 232 (Asp-232) interacts with substrate.

This sequence belongs to the class I-like SAM-binding methyltransferase superfamily. TrmB family.

The catalysed reaction is guanosine(46) in tRNA + S-adenosyl-L-methionine = N(7)-methylguanosine(46) in tRNA + S-adenosyl-L-homocysteine. It participates in tRNA modification; N(7)-methylguanine-tRNA biosynthesis. Its function is as follows. Catalyzes the formation of N(7)-methylguanine at position 46 (m7G46) in tRNA. The sequence is that of tRNA (guanine-N(7)-)-methyltransferase from Helicobacter pylori (strain ATCC 700392 / 26695) (Campylobacter pylori).